Consider the following 225-residue polypeptide: MPAKRITDIDPLDRPREKIEKKGASALKDSELIAAILGKGTKNNDILTISSQVADLLKKDNLPSYDTLLRINGIGPTKAAVLMACFELANRYGTPAEKERIRITEPDHILKISEVTDLSGKSQEHFLVTTLNGASEVICTRTITMGLLNHSLVHPREVFADAITDRAAAIICIHNHPSGNPEPSSEDITVTRQLSEAGKILGISLLDHLIYTKGKVTSLRSLGYL.

The region spanning 102 to 225 (RITEPDHILK…VTSLRSLGYL (124 aa)) is the MPN domain. Histidine 174, histidine 176, and aspartate 187 together coordinate Zn(2+). The short motif at 174–187 (HNHPSGNPEPSSED) is the JAMM motif element.

Belongs to the UPF0758 family.

This is UPF0758 protein Mhun_2739 from Methanospirillum hungatei JF-1 (strain ATCC 27890 / DSM 864 / NBRC 100397 / JF-1).